Consider the following 502-residue polypeptide: Premnaspirodiene oxygenase (502 aa).

Residues 2–22 traverse the membrane as a helical segment; the sequence is QFFSLVSIFLFLSFLFLLRKW. Cys-440 provides a ligand contact to heme.

Belongs to the cytochrome P450 family. It depends on heme as a cofactor.

The protein resides in the membrane. The catalysed reaction is (-)-vetispiradiene + 2 reduced [NADPH--hemoprotein reductase] + 2 O2 = solavetivone + 2 oxidized [NADPH--hemoprotein reductase] + 3 H2O + 2 H(+). Its function is as follows. Involved in the biosynthesis of solavetivone, a potent antifungal phytoalexin. Catalyzes the successive and independent hydroxylations of premnaspirodiene and solavetivol. The first hydroxylation step is 3-fold more efficient than the second hydroxylation reaction. The chain is Premnaspirodiene oxygenase (CYP71D55) from Hyoscyamus muticus (Egyptian henbane).